A 104-amino-acid polypeptide reads, in one-letter code: Large ribosomal subunit protein bL21 (104 aa).

This sequence belongs to the bacterial ribosomal protein bL21 family. Part of the 50S ribosomal subunit. Contacts protein L20.

Functionally, this protein binds to 23S rRNA in the presence of protein L20. This Azobacteroides pseudotrichonymphae genomovar. CFP2 protein is Large ribosomal subunit protein bL21.